The sequence spans 71 residues: Small ribosomal subunit protein bS21 (71 aa).

Positions alanine 48–lysine 59 are enriched in basic residues. A disordered region spans residues alanine 48–tyrosine 71. Residues leucine 60–tyrosine 71 show a composition bias toward basic and acidic residues.

This sequence belongs to the bacterial ribosomal protein bS21 family.

This chain is Small ribosomal subunit protein bS21, found in Aeromonas hydrophila subsp. hydrophila (strain ATCC 7966 / DSM 30187 / BCRC 13018 / CCUG 14551 / JCM 1027 / KCTC 2358 / NCIMB 9240 / NCTC 8049).